Consider the following 529-residue polypeptide: Bifunctional purine biosynthesis protein PurH (529 aa).

One can recognise an MGS-like domain in the interval 1-148 (MQQRRPVRRA…KNHKDVAIVV (148 aa)).

This sequence belongs to the PurH family.

It catalyses the reaction (6R)-10-formyltetrahydrofolate + 5-amino-1-(5-phospho-beta-D-ribosyl)imidazole-4-carboxamide = 5-formamido-1-(5-phospho-D-ribosyl)imidazole-4-carboxamide + (6S)-5,6,7,8-tetrahydrofolate. It carries out the reaction IMP + H2O = 5-formamido-1-(5-phospho-D-ribosyl)imidazole-4-carboxamide. Its pathway is purine metabolism; IMP biosynthesis via de novo pathway; 5-formamido-1-(5-phospho-D-ribosyl)imidazole-4-carboxamide from 5-amino-1-(5-phospho-D-ribosyl)imidazole-4-carboxamide (10-formyl THF route): step 1/1. The protein operates within purine metabolism; IMP biosynthesis via de novo pathway; IMP from 5-formamido-1-(5-phospho-D-ribosyl)imidazole-4-carboxamide: step 1/1. The sequence is that of Bifunctional purine biosynthesis protein PurH from Klebsiella pneumoniae (strain 342).